The following is a 250-amino-acid chain: PF03932 family protein CutC (250 aa).

This sequence belongs to the CutC family.

It is found in the cytoplasm. The chain is PF03932 family protein CutC from Vibrio vulnificus (strain CMCP6).